A 253-amino-acid polypeptide reads, in one-letter code: Salivary gland SP38-40.B protein (253 aa).

Residues 1–21 (MRIKFLVVLAVICLLAHYASA) form the signal peptide. Disordered stretches follow at residues 23–51 (GMGGDKKPKDAPKPKDAPKPKEVKPVKAD), 140–168 (KDEKKEKKVVKVIKPPKEKPPKKPRKECS), and 203–253 (VQGK…DAKK). Composition is skewed to basic and acidic residues over residues 26-51 (GDKKPKDAPKPKDAPKPKEVKPVKAD) and 154-168 (PPKEKPPKKPRKECS). 2 tandem repeats follow at residues 29–34 (KPKDAP) and 35–40 (KPKDAP). A 3 X 6 AA approximate tandem repeats of K-P-K-D-A-P region spans residues 29–47 (KPKDAPKPKDAPKPKEVKP). Residues 41–47 (KPKEVKP) form a 1-3; approximate repeat. Tandem repeats lie at residues 153 to 156 (KPPK) and 158 to 161 (KPPK). A 3 X 4 AA approximate tandem repeats of K-P-P-K region spans residues 153 to 166 (KPPKEKPPKKPRKE). The 2-3; approximate repeat unit spans residues 162 to 166 (KPRKE). Positions 206-217 (KQKKGAKKAKGG) are enriched in basic residues. 6 tandem repeats follow at residues 222 to 225 (PKPG), 226 to 229 (PKPA), 230 to 233 (PKPG), 234 to 237 (PKPA), 238 to 241 (PKPV), and 242 to 245 (PKPA). The interval 222–249 (PKPGPKPAPKPGPKPAPKPVPKPADKPK) is 7 X 4 AA approximate tandem repeats of P-K-P-[GAV]. Over residues 225-243 (GPKPAPKPGPKPAPKPVPK) the composition is skewed to pro residues. Positions 244–253 (PADKPKDAKK) are enriched in basic and acidic residues. The 3-7; approximate repeat unit spans residues 246–249 (DKPK).

Salivary gland.

The protein resides in the secreted. Functionally, used by the larvae to construct a supramolecular structure, the larval tube. The protein is Salivary gland SP38-40.B protein (SP38-40.B) of Chironomus tentans (Midge).